A 351-amino-acid polypeptide reads, in one-letter code: Cyanuric acid amidohydrolase (351 aa).

The interval 1–96 (MPSLRAHVFR…HWTVFARETV (96 aa)) is RU A. Substrate-binding positions include arginine 53 and 77–78 (SG). Residues 103 to 240 (ALAIGVSRTP…HEIIVLGMSA (138 aa)) form an RU B region. The active site involves lysine 153. Substrate is bound by residues arginine 185 and 223-224 (SS). Serine 223 serves as the catalytic Nucleophile. The RU C stretch occupies residues 246-351 (LSIDHAVMRD…PVAIIVEKEQ (106 aa)). Glutamate 283 serves as a coordination point for Mg(2+). Residues arginine 310 and 329–330 (SG) each bind substrate. Alanine 332, glutamine 335, glycine 336, proline 337, and glycine 340 together coordinate Mg(2+).

Belongs to the cyclic amide hydrolase (CyAH) family. In terms of assembly, homotetramer.

It catalyses the reaction cyanurate + H2O = 1-carboxybiuret + H(+). It functions in the pathway xenobiotic degradation; atrazine degradation; biuret from cyanurate: step 1/1. Its activity is regulated as follows. Inhibited by barbituric acid. In terms of biological role, responsible for the hydrolysis of cyanuric acid, an intermediate formed during catabolism of s-triazine based compounds in herbicides such as atrazine and polymers such as melamine. Catalyzes the hydrolytic opening of the s-triazine ring of cyanuric acid (2,4,6-trihydroxy-s-triazine) to yield carbon dioxide and carboxybiuret, which spontaneously decarboxylates to biuret. The polypeptide is Cyanuric acid amidohydrolase (Rhizobium johnstonii (strain DSM 114642 / LMG 32736 / 3841) (Rhizobium leguminosarum bv. viciae)).